The primary structure comprises 310 residues: 300 kDa antigen AG231 (310 aa).

A 4 X 6 AA tandem repeats of V-V-T-G-S-C region spans residues 1–23 (VTGSCVVTGSCVVTDSCVVTGSC). The interval 29–106 (VTTQESVTTQ…TQEPVTVEEH (78 aa)) is 13 X 6 AA tandem repeats of V-V-[TI]-[QE]-E-[PH]. A compositionally biased stretch (low complexity) spans 53-101 (VTIEEPVTTQEPVTIEEPVTTQEPVTTQEPVTTQEPVTTQEPVTTQEPV). The segment at 53–310 (VTIEEPVTTQ…FGRGNKNDKK (258 aa)) is disordered. Composition is skewed to basic and acidic residues over residues 103-114 (VEEHIDEKKGSE) and 147-160 (NKNDKKSKNEKKPS). Residues 107–152 (IDEKKGSEGDNISLSSLSEETEEKSHTKKKKSSWLKFGRGNKNDKK) form a 45 AA repeat 1 repeat. The segment covering 176–190 (TDSQISVNAQDSVTI) has biased composition (polar residues). Residues 188 to 265 (VTIQEPTATQ…TQEPSTTQEH (78 aa)) form a 13 X 6 AA approximate tandem repeats region. Over residues 191–235 (QEPTATQEPPTTQELTATQEPTTTQETVTEQEPTTTQETVTAQEP) the composition is skewed to low complexity. The segment covering 236–263 (ITTQEPVTAQEPVTTQELIATQEPSTTQ) has biased composition (polar residues). Residues 264 to 273 (EHADEKKASE) show a composition bias toward basic and acidic residues. Residues 266-310 (ADEKKASEGDNISLSRLSEETEEKSHTKKKSSWLKFGRGNKNDKK) form a 45 AA repeat 2 repeat.

This chain is 300 kDa antigen AG231 (FIRA), found in Plasmodium falciparum (isolate FC27 / Papua New Guinea).